We begin with the raw amino-acid sequence, 174 residues long: Ubiquitin-fold modifier-conjugating enzyme 1 (174 aa).

Cys119 serves as the catalytic Glycyl thioester intermediate.

The protein belongs to the ubiquitin-conjugating enzyme family. UFC1 subfamily.

In terms of biological role, E2-like enzyme which forms an intermediate with UFM1 via a thioester linkage. The protein is Ubiquitin-fold modifier-conjugating enzyme 1 of Arabidopsis thaliana (Mouse-ear cress).